The primary structure comprises 138 residues: Large ribosomal subunit protein bL19 (138 aa).

This sequence belongs to the bacterial ribosomal protein bL19 family.

In terms of biological role, this protein is located at the 30S-50S ribosomal subunit interface and may play a role in the structure and function of the aminoacyl-tRNA binding site. The protein is Large ribosomal subunit protein bL19 of Rickettsia akari (strain Hartford).